We begin with the raw amino-acid sequence, 614 residues long: Leucine-rich repeat protein soc-2 homolog (614 aa).

Disordered regions lie at residues 1-29 (MNLCSSAGATASTSSLSSSGHVESNSSGP) and 44-79 (NSGGSGRADTALNQSNRSTVNGGGGNPTNSNGPNLT). LRR repeat units follow at residues 134 to 155 (GIKRLDLSKSSITVLPNTVREC), 157 to 178 (HLTELYLYSNKIGQLPTEIGCL), 180 to 201 (NLRNLALNENSLTSLPESLKHC), 203 to 224 (QLKVLDLRHNKLAEIPSVIYRL), 226 to 247 (SLTTLYLRFNRITAVADDLRQL), 249 to 270 (NLTMLSLRENKIKELGSAIGAL), 272 to 293 (NLTTLDVSHNHLEHLPDDIGNC), 295 to 316 (NLSALDLQHNELLDIPDSIGNL), 318 to 340 (SLVRLGLRYNRLNSVPISLKNCK), 341 to 362 (SMDEFNVEGNGITQLPDGMLAS), 365 to 386 (ALTTITLSRNQFTSYPTGGPAQ), 389 to 410 (NVYSINLEHNRIDKIPYGIFSR), 413 to 434 (GLTKLNMKENMLTALPLDVGTW), 436 to 457 (NMVELNLATNALQKLPDDIMNL), 459 to 480 (NLEILILSNNMLKKIPNTIGNL), 482 to 503 (KLRILDLEENRIEVLPHEIGLL), 505 to 526 (ELQRLILQTNQITMLPRSIGHL), 528 to 549 (NLTHLSVSENNLQFLPEEIGSL), 551 to 573 (SLENLYINQNPGLEKLPFELALC), and 575 to 596 (NLKYLNIDKCPLGTIPPEIQAG).

The protein belongs to the SHOC2 family.

Functionally, acts as a Ras effector and participates in MAPK pathway activation. Probably acts as a regulatory subunit of protein phosphatase that specifically dephosphorylates Raf kinase and stimulate Raf activity at specialized signaling complexes upon Ras activation. The protein is Leucine-rich repeat protein soc-2 homolog (Sur-8) of Drosophila virilis (Fruit fly).